Reading from the N-terminus, the 343-residue chain is Tetraacyldisaccharide 4'-kinase (343 aa).

65-72 contributes to the ATP binding site; sequence HAGGTGKT.

The protein belongs to the LpxK family.

It carries out the reaction a lipid A disaccharide + ATP = a lipid IVA + ADP + H(+). Its pathway is glycolipid biosynthesis; lipid IV(A) biosynthesis; lipid IV(A) from (3R)-3-hydroxytetradecanoyl-[acyl-carrier-protein] and UDP-N-acetyl-alpha-D-glucosamine: step 6/6. In terms of biological role, transfers the gamma-phosphate of ATP to the 4'-position of a tetraacyldisaccharide 1-phosphate intermediate (termed DS-1-P) to form tetraacyldisaccharide 1,4'-bis-phosphate (lipid IVA). This Neisseria gonorrhoeae (strain ATCC 700825 / FA 1090) protein is Tetraacyldisaccharide 4'-kinase.